Consider the following 301-residue polypeptide: Homoserine O-acetyltransferase (301 aa).

Residue C142 is the Acyl-thioester intermediate of the active site. Residues K163 and S192 each contribute to the substrate site. H235 serves as the catalytic Proton acceptor. Residue E237 is part of the active site. R249 serves as a coordination point for substrate.

It belongs to the MetA family.

It is found in the cytoplasm. It carries out the reaction L-homoserine + acetyl-CoA = O-acetyl-L-homoserine + CoA. Its pathway is amino-acid biosynthesis; L-methionine biosynthesis via de novo pathway; O-acetyl-L-homoserine from L-homoserine: step 1/1. Transfers an acetyl group from acetyl-CoA to L-homoserine, forming acetyl-L-homoserine. This Succinatimonas hippei (strain DSM 22608 / JCM 16073 / KCTC 15190 / YIT 12066) protein is Homoserine O-acetyltransferase.